We begin with the raw amino-acid sequence, 1169 residues long: Rabankyrin-5 (1169 aa).

At A2 the chain carries N-acetylalanine. Positions 68–130 constitute a BTB domain; sequence SDLKIKVGDR…IYTDELEFRE (63 aa). ANK repeat units follow at residues 217 to 247, 255 to 284, 288 to 317, 322 to 362, and 366 to 396; these read KTEYPLHKAIKVEREDVVFLYLIEMDSQLPG, NGDLALDLALSRRLESIATTLVSHKADVDM, NGWSLLHKGIQRGDLFASTFLIKNGALVNA, AQET…NPNM, and KGRTPLHLSIMARNDCVFSQLLQCKQLDLEL. S270 carries the post-translational modification Phosphoserine. The NPF signature appears at 421-423; it reads NPF. ANK repeat units follow at residues 490–519, 542–572, 588–617, 621–650, 654–683, 687–716, 724–753, 769–798, 802–832, 836–865, 870–899, 905–934, 938–967, 971–1001, 1005–1037, and 1043–1072; these read WGETPLHTACRHGLANLTAELLQQGANPNL, YLQTPLHMAIAYNHPDVVSVILEQKANALHA, RDQTVLGLALWTGMHTIAAQLLGSGASIND, DGQTLLHMAIQRQDSKSALFLLEHQADINV, DGETALQLAIKHQLPLVVDAICTRGADMSV, KGNPPLWLALASNLEDIASTLVRHGCDATC, CLQTLLHRAVDENNESTACFLIRSGCDVNS, DGQTPLHLAASWGLEETVQCLLEFGANVNA, EGRTPVHVAISNQHSVIIQLLISHPNIELSV, QGLTPFACAMTYKNNKAAEAILKRESGAAE, KGRNFLHVAVQNSDIESVLFLISVQANVNS, SKLTPLHLAVQAGSEIIVRNLLLAGAKVNE, HRQTALHLAAQQDLPTICSVLLENGVDFAA, NGNNALHLAVMHGRLNNIRALLTECTVDAEA, RGQSPLHILGQYGKENAAAIFDLFLECMPEYPL, and EGNTVLLLAYMKGNANLCRAIVRSGVRLGV. Residues 650 to 759 are interaction with RHOD and RAB5A; the sequence is VRTQDGETAL…DVNSPRQPGT (110 aa). The FYVE-type zinc-finger motif lies at 1104–1164; sequence WCDGSNCYEC…VCNICFDVLT (61 aa). Positions 1110, 1113, 1126, 1129, 1134, 1137, 1156, and 1159 each coordinate Zn(2+).

As to quaternary structure, interacts with RAB5A (in GTP-bound form). Interacts with RHOD (independent of GTP-loaded status). Interacts with EHD1. Interacts with VPS26A; the interaction is independent of EHD1 and is indicative for an association with the cargo recognition subcomplex of the retromer complex. In terms of tissue distribution, expressed in kidney proximal tubule epithelial cells; at protein level.

It is found in the cytoplasm. The protein localises to the endosome membrane. Its subcellular location is the cytoplasmic vesicle. Functionally, proposed effector of Rab5. Binds to phosphatidylinositol 3-phosphate (PI(3)P). Involved in homotypic early endosome fusion and to a lesser extent in heterotypic fusion of chlathrin-coated vesicles with early endosomes. Required for correct endosomal localization. Involved in the internalization and trafficking of activated tyrosine kinase receptors such as PDGFRB. Regulates the subcellular localization of the retromer complex in a EHD1-dependent manner. Involved in endosome-to-Golgi transport and biosynthetic transport to late endosomes and lysosomes indicative for a regulation of retromer complex-mediated retrograde transport. Involved in macropinocytosis; the function is dependent on Rab5-GTP. This is Rabankyrin-5 (Ankfy1) from Mus musculus (Mouse).